Consider the following 261-residue polypeptide: Thiazole synthase (261 aa).

The Schiff-base intermediate with DXP role is filled by K97. Residues G158, 184-185 (AG), and 206-207 (AS) each bind 1-deoxy-D-xylulose 5-phosphate.

This sequence belongs to the ThiG family. Homotetramer. Forms heterodimers with either ThiH or ThiS.

The protein localises to the cytoplasm. It carries out the reaction [ThiS sulfur-carrier protein]-C-terminal-Gly-aminoethanethioate + 2-iminoacetate + 1-deoxy-D-xylulose 5-phosphate = [ThiS sulfur-carrier protein]-C-terminal Gly-Gly + 2-[(2R,5Z)-2-carboxy-4-methylthiazol-5(2H)-ylidene]ethyl phosphate + 2 H2O + H(+). Its pathway is cofactor biosynthesis; thiamine diphosphate biosynthesis. Its function is as follows. Catalyzes the rearrangement of 1-deoxy-D-xylulose 5-phosphate (DXP) to produce the thiazole phosphate moiety of thiamine. Sulfur is provided by the thiocarboxylate moiety of the carrier protein ThiS. In vitro, sulfur can be provided by H(2)S. The sequence is that of Thiazole synthase from Corynebacterium diphtheriae (strain ATCC 700971 / NCTC 13129 / Biotype gravis).